A 426-amino-acid chain; its full sequence is Glutamate-1-semialdehyde 2,1-aminomutase (426 aa).

Lysine 265 is subject to N6-(pyridoxal phosphate)lysine.

This sequence belongs to the class-III pyridoxal-phosphate-dependent aminotransferase family. HemL subfamily. Requires pyridoxal 5'-phosphate as cofactor.

The protein localises to the cytoplasm. It carries out the reaction (S)-4-amino-5-oxopentanoate = 5-aminolevulinate. It participates in porphyrin-containing compound metabolism; protoporphyrin-IX biosynthesis; 5-aminolevulinate from L-glutamyl-tRNA(Glu): step 2/2. The sequence is that of Glutamate-1-semialdehyde 2,1-aminomutase from Hyperthermus butylicus (strain DSM 5456 / JCM 9403 / PLM1-5).